A 254-amino-acid polypeptide reads, in one-letter code: Ribosomal RNA small subunit methyltransferase G (254 aa).

The interval 1 to 21 (MPEGDGVPRETPSPSVVPESP) is disordered. The span at 9 to 21 (RETPSPSVVPESP) shows a compositional bias: low complexity. S-adenosyl-L-methionine contacts are provided by residues Gly90, Leu95, 142-143 (AE), and Arg157. Residues 230 to 254 (GPLRAATAPAPPGAAKRRPGKGNRR) are disordered. Residues 244–254 (AKRRPGKGNRR) are compositionally biased toward basic residues.

The protein belongs to the methyltransferase superfamily. RNA methyltransferase RsmG family.

The protein resides in the cytoplasm. Specifically methylates the N7 position of guanine in position 518 of 16S rRNA. The chain is Ribosomal RNA small subunit methyltransferase G from Kineococcus radiotolerans (strain ATCC BAA-149 / DSM 14245 / SRS30216).